The sequence spans 186 residues: ATP-dependent protease subunit HslV (186 aa).

Threonine 14 is an active-site residue. Residues alanine 168, cysteine 171, and threonine 174 each coordinate Na(+).

Belongs to the peptidase T1B family. HslV subfamily. As to quaternary structure, a double ring-shaped homohexamer of HslV is capped on each side by a ring-shaped HslU homohexamer. The assembly of the HslU/HslV complex is dependent on binding of ATP.

The protein resides in the cytoplasm. It carries out the reaction ATP-dependent cleavage of peptide bonds with broad specificity.. Allosterically activated by HslU binding. Functionally, protease subunit of a proteasome-like degradation complex believed to be a general protein degrading machinery. In Bradyrhizobium diazoefficiens (strain JCM 10833 / BCRC 13528 / IAM 13628 / NBRC 14792 / USDA 110), this protein is ATP-dependent protease subunit HslV.